Consider the following 200-residue polypeptide: Guanylate kinase (200 aa).

The Guanylate kinase-like domain occupies 4–183; it reads GAVLIISGPS…AKEAMVAIAR (180 aa). 11-18 is an ATP binding site; it reads GPSGCGKS.

This sequence belongs to the guanylate kinase family.

It localises to the cytoplasm. It carries out the reaction GMP + ATP = GDP + ADP. Its function is as follows. Essential for recycling GMP and indirectly, cGMP. This Helicobacter hepaticus (strain ATCC 51449 / 3B1) protein is Guanylate kinase.